Consider the following 855-residue polypeptide: MSEARRDSTSSLQRKKPPWLKLDIPSAAPATAEEPSFLQPLRRQVFLRSVSMPAETAHISSPHYELRRPVLQRQTSITQTIRRGAADWFGVSKESDSTQKWQRKSIRHCSQRYGKLKPQVLRELDLPSQDNVSLTSTETPPPLYVGPCQLGMQKIIDPLARGRAFRVADDTAEGLSAPHTPVTPGAASLCSFSSSRSGFHRLPRRRKRESVAKMSFRAAAALMKGRSVRDGTLRRAQRRSFTPASFLEEDTTDFPDELDTSFFAREGILHEELSTYPDEVFESPSEAALKDWEKAPEQADLTGGALDRSELERSHLMLPLERGWRKQKEGAAAQQPKVRLRQEVVSTAGPRRGQRIAVPVRKLFAREKRPYGLGMVGRLTNRTYRKRIDSFVKRQIEDMDDHRPFFTYWLTFVHSLVTILAVCIYGIAPVGFSQHETVDSVLRNRGVYENVKYVQQENFWIGPSSEALIHLGAKFSPCMRQDPQVHSFIRAAREREKHSACCVRNDRSGCVQTSEEECSSTLAVWVKWPVHPSAPELAGHKRQFGSVCHQDPRVCDEPSSEDPHEWPEDITRWPICTKNSAGNHTNHPHMDCVITGRPCCIGTKGRCEITSREYCDFMRGYFHEEATLCSQVHCMDDVCGLLPFLNPEVPDQFYRLWLSLFLHAGILHCLVSICFQMTVLRDLEKLAGWHRIAIIYLLSGVTGNLASAIFLPYRAEVGPAGSQFGILACLFVELFQSWQILARPWRAFFKLLAVVLFLFTFGLLPWIDNFAHISGFISGLFLSFAFLPYISFGKFDLYRKRCQIIVFQVVFLGLLAGLVVLFYVYPVRCEWCEFLTCIPFTDKFCEKYELDAQLH.

A disordered region spans residues 1 to 35 (MSEARRDSTSSLQRKKPPWLKLDIPSAAPATAEEP). The Cytoplasmic portion of the chain corresponds to 1 to 411 (MSEARRDSTS…HRPFFTYWLT (411 aa)). The span at 25–35 (PSAAPATAEEP) shows a compositional bias: low complexity. Residues S76 and S176 each carry the phosphoserine modification. A phosphothreonine mark is found at T180 and T183. Residue S390 is modified to Phosphoserine. A helical transmembrane segment spans residues 412-432 (FVHSLVTILAVCIYGIAPVGF). Residues 433–655 (SQHETVDSVL…NPEVPDQFYR (223 aa)) lie on the Lumenal side of the membrane. N583 carries N-linked (GlcNAc...) asparagine glycosylation. Residues 656–676 (LWLSLFLHAGILHCLVSICFQ) form a helical membrane-spanning segment. At 677-691 (MTVLRDLEKLAGWHR) the chain is on the cytoplasmic side. The chain crosses the membrane as a helical span at residues 692 to 712 (IAIIYLLSGVTGNLASAIFLP). Residues 713 to 714 (YR) lie on the Lumenal side of the membrane. Residues 715–735 (AEVGPAGSQFGILACLFVELF) form a helical membrane-spanning segment. At 736 to 746 (QSWQILARPWR) the chain is on the cytoplasmic side. Residues 747–767 (AFFKLLAVVLFLFTFGLLPWI) form a helical membrane-spanning segment. The Lumenal portion of the chain corresponds to 768–772 (DNFAH). Residues 773 to 793 (ISGFISGLFLSFAFLPYISFG) traverse the membrane as a helical segment. Topologically, residues 794 to 803 (KFDLYRKRCQ) are cytoplasmic. Residues 804-824 (IIVFQVVFLGLLAGLVVLFYV) traverse the membrane as a helical segment. Residues 825 to 855 (YPVRCEWCEFLTCIPFTDKFCEKYELDAQLH) are Lumenal-facing.

The protein belongs to the peptidase S54 family. In terms of assembly, homodimer, or homooligomer. Interacts with TGFA and HBEGF. Interacts with EGF; may retain EGF in the endoplasmic reticulum and regulates its degradation through the endoplasmic reticulum-associated degradation (ERAD). Interacts (via cytoplasmic N-terminus) with FRMD8/iTAP; this interaction leads to mutual protein stabilization. Interacts with ADAM17/TACE.

Its subcellular location is the endoplasmic reticulum membrane. It localises to the golgi apparatus membrane. Functionally, regulates ADAM17 protease, a sheddase of the epidermal growth factor (EGF) receptor ligands and TNF, thereby plays a role in sleep, cell survival, proliferation, migration and inflammation. Does not exhibit any protease activity on its own. The protein is Inactive rhomboid protein 1 (RHBDF1) of Callithrix jacchus (White-tufted-ear marmoset).